Here is a 513-residue protein sequence, read N- to C-terminus: MKIDGNTFICRFNVAILDDGYYLPMDKYLFVYHDQLEYIGQLNPNIIDQAYAALNEEQIEEYNELTTQNGKVNYLLAYDAKVFRKGGVSQHTVYTITPEIASDVNEFVFDIEITLPQEKSGVIATSAHWLHKQGHKASFESRSFLFKAIFNITKLLHIKRSKTILFTSDSRPNLSGNFKYVYDELLRQKVDFDYDIKTVFKENITDRRKWRDKFRLPYLLGKADYIFVDDFHPLIYTVRFRPSQEIIQVWHAVGAFKTVGFSRTGKKGGPFIDSLNHRSYTKAYVSSETDIPFYAEAFGIREENVVPTGVPRTDVLFDEAYATQIKQEMEDELPIIKGKKVILFAPTFRGNGHGTAHYPFFKIDFERLARYCEKHNAVVLFKMHPFVKNRLNISREHRQYFIDVSDHREVNDILFVTDLLISDYSSLIYEYAVFKKPMIFYAFDLEDYITTRDFYEPFESFVPGKIVQSFDALMDALDNEDYEVEKVVPFLDKHFKYQDGRSSERLVKDLFRR.

Belongs to the CDP-glycerol glycerophosphotransferase family.

The protein localises to the cell membrane. The enzyme catalyses 4-O-[di(2R)-glycerylphospho]-N-acetyl-beta-D-mannosaminyl-(1-&gt;4)-N-acetyl-alpha-D-glucosaminyl di-trans,octa-cis-undecaprenyl diphosphate + n CDP-L-ribitol = 4-O-[(D-ribitylphospho)(n)-di{(2R)-glycerylphospho}]-N-acetyl-beta-D-mannosaminyl-(1-&gt;4)-N-acetyl-alpha-D-glucosaminyl di-trans,octa-cis-undecaprenyl diphosphate + n CMP + n H(+). Its pathway is cell wall biogenesis; poly(ribitol phosphate) teichoic acid biosynthesis. In terms of biological role, can catalyze the polymerization of the main chain of the major teichoic acid by sequential transfer of ribitol phosphate units from CDP-ribitol to the second glycerol phosphate attached to the disaccharide linkage unit. The protein is Teichoic acid ribitol-phosphate polymerase TarK (tarK) of Staphylococcus aureus (strain NCTC 8325 / PS 47).